The following is a 160-amino-acid chain: Transcription antitermination protein NusB (160 aa).

It belongs to the NusB family.

Its function is as follows. Involved in transcription antitermination. Required for transcription of ribosomal RNA (rRNA) genes. Binds specifically to the boxA antiterminator sequence of the ribosomal RNA (rrn) operons. The polypeptide is Transcription antitermination protein NusB (Gluconobacter oxydans (strain 621H) (Gluconobacter suboxydans)).